A 190-amino-acid chain; its full sequence is Ganglioside GM2 activator (190 aa).

The first 23 residues, Met1–Ala23, serve as a signal peptide directing secretion. 4 disulfides stabilise this stretch: Cys36-Cys180, Cys96-Cys103, Cys109-Cys135, and Cys122-Cys133. N-linked (GlcNAc...) asparagine glycosylation is present at Asn60.

It localises to the lysosome. The enzyme catalyses cholesterol(in) = cholesterol(out). In terms of biological role, the large binding pocket can accommodate several single chain phospholipids and fatty acids, GM2A also exhibits some calcium-independent phospholipase activity. Binds gangliosides and stimulates ganglioside GM2 degradation. It stimulates only the breakdown of ganglioside GM2 and glycolipid GA2 by beta-hexosaminidase A. It extracts single GM2 molecules from membranes and presents them in soluble form to beta-hexosaminidase A for cleavage of N-acetyl-D-galactosamine and conversion to GM3. Has cholesterol transfer activity. The sequence is that of Ganglioside GM2 activator (GM2A) from Macaca fascicularis (Crab-eating macaque).